Reading from the N-terminus, the 220-residue chain is Fructose-6-phosphate aldolase (220 aa).

Lysine 85 acts as the Schiff-base intermediate with substrate in catalysis.

Belongs to the transaldolase family. Type 3A subfamily. As to quaternary structure, homodecamer.

The protein resides in the cytoplasm. The catalysed reaction is beta-D-fructose 6-phosphate = dihydroxyacetone + D-glyceraldehyde 3-phosphate. Its function is as follows. Catalyzes the reversible formation of fructose 6-phosphate from dihydroxyacetone and D-glyceraldehyde 3-phosphate via an aldolization reaction. The sequence is that of Fructose-6-phosphate aldolase from Salmonella agona (strain SL483).